We begin with the raw amino-acid sequence, 370 residues long: Leucine-rich repeat-containing protein 19 (370 aa).

An N-terminal signal peptide occupies residues 1–24 (MKVTGITILFWPLSMILLSDKIQS). The Extracellular segment spans residues 25–270 (SKREVQCNFT…SEHEPLGKSW (246 aa)). N-linked (GlcNAc...) asparagine glycosylation is found at asparagine 32, asparagine 37, asparagine 62, and asparagine 95. LRR repeat units lie at residues 46–71 (KKDV…VLQT), 72–95 (YFLL…GFGN), 96–119 (LSSL…AFLG), 120–143 (LNKL…VFVP), and 145–168 (RSLK…LFHL). Residues 176-227 (NLWNCSCSLFNLQNWLNTSNVTLENENITMCSYPNSLQSYNIKTVPHKAECH) form the LRRCT domain. N-linked (GlcNAc...) asparagine glycosylation is found at asparagine 179, asparagine 192, asparagine 195, asparagine 202, asparagine 251, and asparagine 256. The helical transmembrane segment at 271–291 (AFLVGVVVTVLTTSLLIFIAI) threads the bilayer. The Cytoplasmic portion of the chain corresponds to 292 to 370 (KCPIWYNILL…IDIHELCEEN (79 aa)).

In terms of assembly, interacts with TRAF2 and TRAF6. Expressed in renal collecting duct epithelial cells.

It is found in the membrane. With respect to regulation, activated by TLR ligands such as LPS, bacterial DNA and peptidoglycan. Its function is as follows. Pathogen-recognition receptor which mediates the activation of TRAF2- and TRAF6 NF-kappa-B signaling pathways and induces the expression of pro-inflammatory cytokines. In kidney, prevents infection by uropathogenic bacteria by inducing the production of cytokines, chemokines and antimicrobial substances. In gut, involved in host-microbiota interactions, plays a critical role in promoting the recruitment of immune cells and intestinal inflammation. The protein is Leucine-rich repeat-containing protein 19 of Homo sapiens (Human).